The chain runs to 465 residues: Phosphomethylpyrimidine synthase (465 aa).

Substrate contacts are provided by residues Asn80, Met109, Tyr139, His175, 195 to 197 (SRG), 236 to 239 (DSLR), and Glu275. Position 279 (His279) interacts with Zn(2+). Tyr302 serves as a coordination point for substrate. His343 lines the Zn(2+) pocket. The [4Fe-4S] cluster site is built by Cys423, Cys426, and Cys431.

This sequence belongs to the ThiC family. The cofactor is [4Fe-4S] cluster.

It carries out the reaction 5-amino-1-(5-phospho-beta-D-ribosyl)imidazole + S-adenosyl-L-methionine = 4-amino-2-methyl-5-(phosphooxymethyl)pyrimidine + CO + 5'-deoxyadenosine + formate + L-methionine + 3 H(+). The protein operates within cofactor biosynthesis; thiamine diphosphate biosynthesis. In terms of biological role, catalyzes the synthesis of the hydroxymethylpyrimidine phosphate (HMP-P) moiety of thiamine from aminoimidazole ribotide (AIR) in a radical S-adenosyl-L-methionine (SAM)-dependent reaction. The chain is Phosphomethylpyrimidine synthase from Synechococcus sp. (strain CC9311).